The chain runs to 294 residues: 1D-myo-inositol 2-acetamido-2-deoxy-alpha-D-glucopyranoside deacetylase (294 aa).

Zn(2+) contacts are provided by H15, D18, and H150.

This sequence belongs to the MshB deacetylase family. The cofactor is Zn(2+).

It carries out the reaction 1D-myo-inositol 2-acetamido-2-deoxy-alpha-D-glucopyranoside + H2O = 1D-myo-inositol 2-amino-2-deoxy-alpha-D-glucopyranoside + acetate. Catalyzes the deacetylation of 1D-myo-inositol 2-acetamido-2-deoxy-alpha-D-glucopyranoside (GlcNAc-Ins) in the mycothiol biosynthesis pathway. The sequence is that of 1D-myo-inositol 2-acetamido-2-deoxy-alpha-D-glucopyranoside deacetylase from Streptomyces avermitilis (strain ATCC 31267 / DSM 46492 / JCM 5070 / NBRC 14893 / NCIMB 12804 / NRRL 8165 / MA-4680).